A 513-amino-acid polypeptide reads, in one-letter code: Cytochrome P450 1A2 (513 aa).

S68 is a glycosylation site (O-linked (GlcNAc) serine). C456 contributes to the heme binding site.

The protein belongs to the cytochrome P450 family. As to quaternary structure, interacts with PGRMC1; the interaction requires PGRMC1 homodimerization. It depends on heme as a cofactor.

It localises to the endoplasmic reticulum membrane. The protein localises to the microsome membrane. It catalyses the reaction an organic molecule + reduced [NADPH--hemoprotein reductase] + O2 = an alcohol + oxidized [NADPH--hemoprotein reductase] + H2O + H(+). The catalysed reaction is 17beta-estradiol + reduced [NADPH--hemoprotein reductase] + O2 = 2-hydroxy-17beta-estradiol + oxidized [NADPH--hemoprotein reductase] + H2O + H(+). It carries out the reaction 17beta-estradiol + reduced [NADPH--hemoprotein reductase] + O2 = 4-hydroxy-17beta-estradiol + oxidized [NADPH--hemoprotein reductase] + H2O + H(+). The enzyme catalyses estrone + reduced [NADPH--hemoprotein reductase] + O2 = 2-hydroxyestrone + oxidized [NADPH--hemoprotein reductase] + H2O + H(+). It catalyses the reaction estrone + reduced [NADPH--hemoprotein reductase] + O2 = 4-hydroxyestrone + oxidized [NADPH--hemoprotein reductase] + H2O + H(+). The catalysed reaction is cholesterol + reduced [NADPH--hemoprotein reductase] + O2 = 25-hydroxycholesterol + oxidized [NADPH--hemoprotein reductase] + H2O + H(+). It carries out the reaction all-trans-retinol + reduced [NADPH--hemoprotein reductase] + O2 = all-trans-retinal + oxidized [NADPH--hemoprotein reductase] + 2 H2O + H(+). The enzyme catalyses all-trans-retinal + reduced [NADPH--hemoprotein reductase] + O2 = all-trans-retinoate + oxidized [NADPH--hemoprotein reductase] + H2O + 2 H(+). It catalyses the reaction (5Z,8Z,11Z,14Z)-eicosatetraenoate + reduced [NADPH--hemoprotein reductase] + O2 = (14R,15S)-epoxy-(5Z,8Z,11Z)-eicosatrienoate + oxidized [NADPH--hemoprotein reductase] + H2O + H(+). The catalysed reaction is (5Z,8Z,11Z,14Z)-eicosatetraenoate + reduced [NADPH--hemoprotein reductase] + O2 = (14S,15R)-epoxy-(5Z,8Z,11Z)-eicosatrienoate + oxidized [NADPH--hemoprotein reductase] + H2O + H(+). It carries out the reaction (5Z,8Z,11Z,14Z,17Z)-eicosapentaenoate + reduced [NADPH--hemoprotein reductase] + O2 = (17R,18S)-epoxy-(5Z,8Z,11Z,14Z)-eicosatetraenoate + oxidized [NADPH--hemoprotein reductase] + H2O + H(+). The enzyme catalyses (4Z,7Z,10Z,13Z,16Z,19Z)-docosahexaenoate + reduced [NADPH--hemoprotein reductase] + O2 = (19R,20S)-epoxy-(4Z,7Z,10Z,13Z,16Z)-docosapentaenoate + oxidized [NADPH--hemoprotein reductase] + H2O + H(+). It catalyses the reaction (5S)-hydroperoxy-(6E,8Z,11Z,14Z)-eicosatetraenoate = 5-oxo-(6E,8Z,11Z,14Z)-eicosatetraenoate + H2O. The catalysed reaction is (12S)-hydroperoxy-(5Z,8Z,10E,14Z)-eicosatetraenoate = 12-oxo-(5Z,8Z,10E,14Z)-eicosatetraenoate + H2O. It carries out the reaction (15S)-hydroperoxy-(5Z,8Z,11Z,13E)-eicosatetraenoate = 15-oxo-(5Z,8Z,11Z,13E)-eicosatetraenoate + H2O. The enzyme catalyses (13S)-hydroperoxy-(9Z,11E)-octadecadienoate = 13-oxo-(9Z,11E)-octadecadienoate + H2O. It catalyses the reaction (5Z,8Z,11Z,14Z)-eicosatetraenoate + reduced [NADPH--hemoprotein reductase] + O2 = 13-hydroxy-(5Z,8Z,11Z,14Z)-eicosatetraenoate + oxidized [NADPH--hemoprotein reductase] + H2O + H(+). The catalysed reaction is (5Z,8Z,11Z,14Z)-eicosatetraenoate + reduced [NADPH--hemoprotein reductase] + O2 = 19-hydroxy-(5Z,8Z,11Z,14Z)-eicosatetraenoate + oxidized [NADPH--hemoprotein reductase] + H2O + H(+). It carries out the reaction (9Z,12Z)-octadecadienoate + reduced [NADPH--hemoprotein reductase] + O2 = 11-hydroxy-(9Z,12Z)-octadecadienoate + oxidized [NADPH--hemoprotein reductase] + H2O + H(+). It functions in the pathway cofactor metabolism; retinol metabolism. The protein operates within steroid metabolism; cholesterol metabolism. It participates in lipid metabolism; arachidonate metabolism. Its function is as follows. A cytochrome P450 monooxygenase involved in the metabolism of various endogenous substrates, including fatty acids, steroid hormones and vitamins. Mechanistically, uses molecular oxygen inserting one oxygen atom into a substrate, and reducing the second into a water molecule, with two electrons provided by NADPH via cytochrome P450 reductase (NADPH--hemoprotein reductase). Catalyzes the hydroxylation of carbon-hydrogen bonds. Exhibits high catalytic activity for the formation of hydroxyestrogens from estrone (E1) and 17beta-estradiol (E2), namely 2-hydroxy E1 and E2. Metabolizes cholesterol toward 25-hydroxycholesterol, a physiological regulator of cellular cholesterol homeostasis. May act as a major enzyme for all-trans retinoic acid biosynthesis in the liver. Catalyzes two successive oxidative transformation of all-trans retinol to all-trans retinal and then to the active form all-trans retinoic acid. Primarily catalyzes stereoselective epoxidation of the last double bond of polyunsaturated fatty acids (PUFA), displaying a strong preference for the (R,S) stereoisomer. Catalyzes bisallylic hydroxylation and omega-1 hydroxylation of PUFA. May also participate in eicosanoids metabolism by converting hydroperoxide species into oxo metabolites (lipoxygenase-like reaction, NADPH-independent). Plays a role in the oxidative metabolism of xenobiotics. Catalyzes the N-hydroxylation of heterocyclic amines and the O-deethylation of phenacetin. Metabolizes caffeine via N3-demethylation. This Rattus norvegicus (Rat) protein is Cytochrome P450 1A2 (Cyp1a2).